Consider the following 362-residue polypeptide: 2-oxoglutarate-dependent dioxygenase lolO2 (362 aa).

The region spanning 199 to 312 is the Fe2OG dioxygenase domain; that stretch reads TWNYFLGQPV…RYSLVFFGHL (114 aa). Fe cation contacts are provided by His222, Asp224, and His280. Position 303 (Arg303) interacts with 2-oxoglutarate.

This sequence belongs to the iron/ascorbate-dependent oxidoreductase family. Requires Fe(2+) as cofactor.

It participates in alkaloid biosynthesis. 2-oxoglutarate-dependent dioxygenase; part of the gene cluster that mediates the biosynthesis of loline alkaloids, potent insecticidal agents composed of a pyrrolizidine ring system and an uncommon ether bridge linking carbons 2 and 7. Lolines are structurally differentiated by the various modifications of the L-amino group and include norloline, loline, N-methylloline, N-acetylloline, N-acetylnorloline, and N-formylloline. The first committed step is the condensation of O-acetyl-L-homoserine (derived from L-aspartic acid) and L-proline, probably catalyzed by the gamma-type pyridoxal 5'-phosphate(PLP)-dependent enzyme lolC, to give the diamino diacid, NACPP. Ensuing cyclization, decarboxylation, and acetylation steps yield 1-exo-acetamidopyrrolizidine (AcAP). LolO is required for installation of the ether bridge upon the pathway intermediate, 1-exo-acetamidopyrrolizidine (AcAP). In sequential 2-oxoglutarate- and O(2)-consuming steps, lolO removes hydrogens from C2 and C7 of AcAP to form both carbon-oxygen bonds in N-acetylnorloline (NANL), the precursor to all other lolines. The enzymes lolD, lolE, lolF and lolT have also been proposed to be involved in the ether-bridge installation. Further processing of the exocyclic moiety of NANL by fungal N-acetamidase (LolN), methyltransferase (LolM), and cytochrome P450 (LolP) enzymes, with occasional involvement of a plant acetyltransferase, generates the other known lolines. LolN transforms NANL to norlonine which is monomethylated and dimethylated to respectively lonine and N-methyllonine (NML) by lolM. LolP catalyzes hydroxylation of the methyl group in N-methylloline (NML) and further oxygenation to N-formylloline (NFL). A plant acetyltransferase is responsible for the acetylation of loline to form N-acetylloline (NAL). LolA might interact with aspartate kinase to prevent feedback inhibition of its activity by these end products and thereby promote production of L-homoserine from L-aspartate. The sequence is that of 2-oxoglutarate-dependent dioxygenase lolO2 from Epichloe uncinata (Endophyte fungus).